The sequence spans 63 residues: Ferredoxin (63 aa).

Positions 2–29 (KVTVDQDLCIACGTCIDLCPSVFDWDDE) constitute a 4Fe-4S ferredoxin-type domain. The [4Fe-4S] cluster site is built by cysteine 10, cysteine 13, cysteine 16, and cysteine 55.

It depends on [4Fe-4S] cluster as a cofactor.

Its function is as follows. Ferredoxins are iron-sulfur proteins that transfer electrons in a wide variety of metabolic reactions. The chain is Ferredoxin from Moorella thermoacetica (Clostridium thermoaceticum).